Consider the following 314-residue polypeptide: Ribonuclease Z (314 aa).

Zn(2+)-binding residues include His62, His64, Asp66, His67, His139, Asp210, and His268. Asp66 serves as the catalytic Proton acceptor.

This sequence belongs to the RNase Z family. In terms of assembly, homodimer. Zn(2+) serves as cofactor.

It carries out the reaction Endonucleolytic cleavage of RNA, removing extra 3' nucleotides from tRNA precursor, generating 3' termini of tRNAs. A 3'-hydroxy group is left at the tRNA terminus and a 5'-phosphoryl group is left at the trailer molecule.. Its function is as follows. Zinc phosphodiesterase, which displays some tRNA 3'-processing endonuclease activity. Probably involved in tRNA maturation, by removing a 3'-trailer from precursor tRNA. The polypeptide is Ribonuclease Z (Acaryochloris marina (strain MBIC 11017)).